The sequence spans 233 residues: Glucosamine-6-phosphate deaminase (233 aa).

The Proton acceptor; for enolization step role is filled by Asp62. Asn128 acts as the For ring-opening step in catalysis. The Proton acceptor; for ring-opening step role is filled by His130. Catalysis depends on Glu135, which acts as the For ring-opening step.

This sequence belongs to the glucosamine/galactosamine-6-phosphate isomerase family. NagB subfamily.

It carries out the reaction alpha-D-glucosamine 6-phosphate + H2O = beta-D-fructose 6-phosphate + NH4(+). The protein operates within amino-sugar metabolism; N-acetylneuraminate degradation; D-fructose 6-phosphate from N-acetylneuraminate: step 5/5. Its function is as follows. Catalyzes the reversible isomerization-deamination of glucosamine 6-phosphate (GlcN6P) to form fructose 6-phosphate (Fru6P) and ammonium ion. In Enterococcus faecalis (strain ATCC 700802 / V583), this protein is Glucosamine-6-phosphate deaminase.